The chain runs to 61 residues: Large ribosomal subunit protein uL30 (61 aa).

It belongs to the universal ribosomal protein uL30 family. As to quaternary structure, part of the 50S ribosomal subunit.

The protein is Large ribosomal subunit protein uL30 of Chlorobium phaeobacteroides (strain BS1).